The sequence spans 199 residues: N-(5'-phosphoribosyl)anthranilate isomerase (199 aa).

It belongs to the TrpF family.

It catalyses the reaction N-(5-phospho-beta-D-ribosyl)anthranilate = 1-(2-carboxyphenylamino)-1-deoxy-D-ribulose 5-phosphate. It functions in the pathway amino-acid biosynthesis; L-tryptophan biosynthesis; L-tryptophan from chorismate: step 3/5. In Solibacter usitatus (strain Ellin6076), this protein is N-(5'-phosphoribosyl)anthranilate isomerase.